A 274-amino-acid polypeptide reads, in one-letter code: Glutamate racemase (274 aa).

Residues 9–10 and 41–42 contribute to the substrate site; these read DS and YG. The active-site Proton donor/acceptor is Cys73. 74-75 is a substrate binding site; it reads NT. The active-site Proton donor/acceptor is Cys183. 184–185 is a binding site for substrate; that stretch reads TH.

This sequence belongs to the aspartate/glutamate racemases family.

It carries out the reaction L-glutamate = D-glutamate. Its pathway is cell wall biogenesis; peptidoglycan biosynthesis. Functionally, provides the (R)-glutamate required for cell wall biosynthesis. The chain is Glutamate racemase from Shewanella baltica (strain OS195).